Reading from the N-terminus, the 328-residue chain is DNA-directed RNA polymerase subunit alpha (328 aa).

An alpha N-terminal domain (alpha-NTD) region spans residues 1 to 230 (MNKIKITPSV…QSQMEIFTND (230 aa)). Residues 243 to 328 (NSEIFYQPLD…ILKKIEQNKS (86 aa)) form an alpha C-terminal domain (alpha-CTD) region.

Belongs to the RNA polymerase alpha chain family. Homodimer. The RNAP catalytic core consists of 2 alpha, 1 beta, 1 beta' and 1 omega subunit. When a sigma factor is associated with the core the holoenzyme is formed, which can initiate transcription.

It carries out the reaction RNA(n) + a ribonucleoside 5'-triphosphate = RNA(n+1) + diphosphate. Functionally, DNA-dependent RNA polymerase catalyzes the transcription of DNA into RNA using the four ribonucleoside triphosphates as substrates. This chain is DNA-directed RNA polymerase subunit alpha, found in Nitratiruptor sp. (strain SB155-2).